We begin with the raw amino-acid sequence, 299 residues long: MKQKTIKNKVELVGIGLHKGVPVKMELEPLEVDSGIVFYRSDLGVSIEFKAENVIDTTMATVIAKGEAKISTIEHLLSAIHAYGIDNIRISLDNEEVPIMDGSAIGYCMLLEEAGIVAQNAPKKAIVIKKSIEIVDEKKFVRVEPSERTIFDFKIDFNHPVIRQQHYKFTFSTQAYKEEIARARTFGFLHEVNYLRSKGLAKGGDLSNCIVLDESSILNKEGLRYKEEFVRHKILDAIGDMALLGMPLLGSYISFAGSHKLNHLLTKQILSDEKAYEVVSLEDKVEEAALDYAFLHEQH.

Zn(2+) contacts are provided by His75, His232, and Asp236. Residue His259 is the Proton donor of the active site.

Belongs to the LpxC family. It depends on Zn(2+) as a cofactor.

It catalyses the reaction a UDP-3-O-[(3R)-3-hydroxyacyl]-N-acetyl-alpha-D-glucosamine + H2O = a UDP-3-O-[(3R)-3-hydroxyacyl]-alpha-D-glucosamine + acetate. It participates in glycolipid biosynthesis; lipid IV(A) biosynthesis; lipid IV(A) from (3R)-3-hydroxytetradecanoyl-[acyl-carrier-protein] and UDP-N-acetyl-alpha-D-glucosamine: step 2/6. In terms of biological role, catalyzes the hydrolysis of UDP-3-O-myristoyl-N-acetylglucosamine to form UDP-3-O-myristoylglucosamine and acetate, the committed step in lipid A biosynthesis. This Helicobacter hepaticus (strain ATCC 51449 / 3B1) protein is UDP-3-O-acyl-N-acetylglucosamine deacetylase.